Reading from the N-terminus, the 326-residue chain is Ribosomal large subunit pseudouridine synthase D (326 aa).

The S4 RNA-binding domain occupies 18 to 91; it reads QRLDQALAEM…IPLDIVYEDE (74 aa). D139 is a catalytic residue.

This sequence belongs to the pseudouridine synthase RluA family. As to quaternary structure, in late stage pre-50S ribosomal subunit interacts with ObgE and DarP(YjgA).

It is found in the cytoplasm. The catalysed reaction is uridine(1911/1915/1917) in 23S rRNA = pseudouridine(1911/1915/1917) in 23S rRNA. Responsible for synthesis of pseudouridine from uracil at positions 1911, 1915 and 1917 in 23S ribosomal RNA. Other positions are not modified. Uridine isomerization occurs as a late step during the assembly of the large ribosomal subunit. Member of a network of 50S ribosomal subunit biogenesis factors (ObgE, RluD, RsfS and DarP(YjgA)) which assembles along the 30S-50S interface, allowing 23S rRNA modification and preventing incorrect 23S rRNA structures from forming. The protein is Ribosomal large subunit pseudouridine synthase D of Escherichia coli (strain K12).